The chain runs to 91 residues: UPF0250 protein Pfl01_4965 (91 aa).

Belongs to the UPF0250 family.

In Pseudomonas fluorescens (strain Pf0-1), this protein is UPF0250 protein Pfl01_4965.